Reading from the N-terminus, the 311-residue chain is Probable inactive peptidyl-prolyl cis-trans isomerase-like 6 (311 aa).

Residues 145–308 form the PPIase cyclophilin-type domain; it reads FLDICIDSSP…HMCRITDSGD (164 aa).

The protein belongs to the cyclophilin-type PPIase family.

Probable inactive PPIase with no peptidyl-prolyl cis-trans isomerase activity. This chain is Probable inactive peptidyl-prolyl cis-trans isomerase-like 6, found in Homo sapiens (Human).